A 317-amino-acid chain; its full sequence is Lipoyl synthase (317 aa).

7 residues coordinate [4Fe-4S] cluster: Cys-55, Cys-60, Cys-66, Cys-81, Cys-85, Cys-88, and Ser-292. In terms of domain architecture, Radical SAM core spans 67 to 281 (WEDREATFLI…ERYATEIGFA (215 aa)).

It belongs to the radical SAM superfamily. Lipoyl synthase family. [4Fe-4S] cluster is required as a cofactor.

The protein localises to the cytoplasm. The catalysed reaction is [[Fe-S] cluster scaffold protein carrying a second [4Fe-4S](2+) cluster] + N(6)-octanoyl-L-lysyl-[protein] + 2 oxidized [2Fe-2S]-[ferredoxin] + 2 S-adenosyl-L-methionine + 4 H(+) = [[Fe-S] cluster scaffold protein] + N(6)-[(R)-dihydrolipoyl]-L-lysyl-[protein] + 4 Fe(3+) + 2 hydrogen sulfide + 2 5'-deoxyadenosine + 2 L-methionine + 2 reduced [2Fe-2S]-[ferredoxin]. Its pathway is protein modification; protein lipoylation via endogenous pathway; protein N(6)-(lipoyl)lysine from octanoyl-[acyl-carrier-protein]: step 2/2. Catalyzes the radical-mediated insertion of two sulfur atoms into the C-6 and C-8 positions of the octanoyl moiety bound to the lipoyl domains of lipoate-dependent enzymes, thereby converting the octanoylated domains into lipoylated derivatives. The protein is Lipoyl synthase of Mycolicibacterium gilvum (strain PYR-GCK) (Mycobacterium gilvum (strain PYR-GCK)).